Reading from the N-terminus, the 224-residue chain is 7-cyano-7-deazaguanine synthase (224 aa).

8 to 18 (LSGGMDSAAVI) is a binding site for ATP. Residues C186, C196, C199, and C202 each coordinate Zn(2+).

This sequence belongs to the QueC family. Requires Zn(2+) as cofactor.

It carries out the reaction 7-carboxy-7-deazaguanine + NH4(+) + ATP = 7-cyano-7-deazaguanine + ADP + phosphate + H2O + H(+). It participates in purine metabolism; 7-cyano-7-deazaguanine biosynthesis. Its function is as follows. Catalyzes the ATP-dependent conversion of 7-carboxy-7-deazaguanine (CDG) to 7-cyano-7-deazaguanine (preQ(0)). The protein is 7-cyano-7-deazaguanine synthase of Xanthomonas oryzae pv. oryzae (strain MAFF 311018).